The sequence spans 599 residues: Elongation factor 4 (599 aa).

Residues 5–187 form the tr-type G domain; the sequence is SHIRNFSIIA…RLVHTIPAPE (183 aa). GTP-binding positions include 17-22 and 134-137; these read DHGKST and NKMD.

The protein belongs to the TRAFAC class translation factor GTPase superfamily. Classic translation factor GTPase family. LepA subfamily.

The protein localises to the cell inner membrane. It carries out the reaction GTP + H2O = GDP + phosphate + H(+). In terms of biological role, required for accurate and efficient protein synthesis under certain stress conditions. May act as a fidelity factor of the translation reaction, by catalyzing a one-codon backward translocation of tRNAs on improperly translocated ribosomes. Back-translocation proceeds from a post-translocation (POST) complex to a pre-translocation (PRE) complex, thus giving elongation factor G a second chance to translocate the tRNAs correctly. Binds to ribosomes in a GTP-dependent manner. The polypeptide is Elongation factor 4 (Pseudomonas putida (strain ATCC 47054 / DSM 6125 / CFBP 8728 / NCIMB 11950 / KT2440)).